We begin with the raw amino-acid sequence, 75 residues long: UPF0235 protein Mvan_2846 (75 aa).

Belongs to the UPF0235 family.

This Mycolicibacterium vanbaalenii (strain DSM 7251 / JCM 13017 / BCRC 16820 / KCTC 9966 / NRRL B-24157 / PYR-1) (Mycobacterium vanbaalenii) protein is UPF0235 protein Mvan_2846.